The following is a 217-amino-acid chain: Casparian strip membrane protein 6 (217 aa).

At 1-57 (MEEAKHIEAVEAKQIEAEEAQRIKAGEAKQIEAGETSRSSRKVITFEPKLVINKGIS) the chain is on the cytoplasmic side. A helical transmembrane segment spans residues 58 to 78 (VLGFVLRLFAVFGTIGSALAM). Residues 79 to 103 (GTTHESVVSLSQLVLLKVKYSDLPT) are Extracellular-facing. Residues 104–124 (LMFFVVANAIAGGYLVLSLPV) form a helical membrane-spanning segment. At 125 to 138 (SIFHIFSTKAKTSR) the chain is on the cytoplasmic side. A helical membrane pass occupies residues 139-159 (IILLVIDTVMLALVSSGASAA). Residues 160 to 191 (TATVYLAHEGNTTANWPPICQQFDGFCERISG) are Extracellular-facing. Residue Asn-170 is glycosylated (N-linked (GlcNAc...) asparagine). The chain crosses the membrane as a helical span at residues 192–212 (SLIGSFCAVILLMLIVINSAI). Topologically, residues 213–217 (SLSRH) are cytoplasmic.

It belongs to the Casparian strip membrane proteins (CASP) family. In terms of assembly, homodimer and heterodimers.

It localises to the cell membrane. Functionally, regulates membrane-cell wall junctions and localized cell wall deposition. Required for establishment of the Casparian strip membrane domain (CSD) and the subsequent formation of Casparian strips, a cell wall modification of the root endodermis that determines an apoplastic barrier between the intraorganismal apoplasm and the extraorganismal apoplasm and prevents lateral diffusion. This chain is Casparian strip membrane protein 6, found in Arabidopsis lyrata subsp. lyrata (Lyre-leaved rock-cress).